The chain runs to 384 residues: G protein-coupled receptor 88 (384 aa).

Topologically, residues 1–35 are extracellular; the sequence is MTNSSSTSTSTTTGGSLLLLCEEEESWAGRRIPVS. Asn-3 carries an N-linked (GlcNAc...) asparagine glycan. The chain crosses the membrane as a helical span at residues 36-56; that stretch reads LLYSGLAIGGTLANGMVIYLV. Residues 57-73 are Cytoplasmic-facing; it reads SSFRKLQTTSNAFIVNG. Residues 74–94 traverse the membrane as a helical segment; sequence CAADLSVCALWMPQEAVLGLL. The Extracellular portion of the chain corresponds to 95–116; the sequence is PAGSAEPPGDWDSGGGSYRLLR. The helical transmembrane segment at 117 to 136 threads the bilayer; sequence GGLLGLGLTVSLLSHCLVAL. Residues 137–158 lie on the Cytoplasmic side of the membrane; sequence NRYLLITRAPATYQVLYQRRHT. Residues 159–179 traverse the membrane as a helical segment; sequence AGMLALSWALALGLVLLLPPW. The Extracellular segment spans residues 180 to 195; it reads APKPGAEPPQVHYPAL. A helical membrane pass occupies residues 196 to 216; it reads LAAGALLAQTALLLHCYLGIV. Residues 217–285 lie on the Cytoplasmic side of the membrane; the sequence is RRVRVSVKRV…RAQRRLSGLS (69 aa). A helical transmembrane segment spans residues 286–306; that stretch reads VLLLCCVFLLATQPLVWVSLA. Residues 307-310 lie on the Extracellular side of the membrane; that stretch reads SGFS. A helical transmembrane segment spans residues 311-331; it reads LPVPWGVQAASWLLCCALSAL. At 332 to 384 the chain is on the cytoplasmic side; the sequence is NPLLYTWRNEEFRRSVRSVLPGVGDAAAAAAAATAVPAMSQAQLGTRAAGQHW.

It belongs to the G-protein coupled receptor 1 family. In terms of tissue distribution, expressed predominantly in the striatum. Expressed also in olfactory tubercle, nucleus accumbens, amygdala, and neocortex. Spinal cord, pons, and medulla expression remains discrete. Also expressed in peripheral tissues, including adrenal cortex (16 dpc to 21 dpc) and cochlear ganglia (19 dpc to P3) and also at moderate levels in retina (18 dpc to 19 dpc) and spleen (21 dpc to P7).

The protein resides in the cell membrane. The protein localises to the cell projection. It is found in the cilium membrane. It localises to the cytoplasm. Its subcellular location is the nucleus. In terms of biological role, orphan G protein-coupled receptor implicated in a large repertoire of behavioral responses that engage motor activities, spatial learning, and emotional processing. May play a role in the regulation of cognitive and motor function. Couples with the heterotrimeric G protein complex of the G(i) subfamily, consisting of GNAI1, GNB1 and GNG2, thereby acting through a G(i)-mediated pathway. Plays a role in the attenuation of D1 dopamine receptor (D1R)-mediated cAMP response in ciliated cells. In non-ciliated cells, involved in the inhibition of the beta-2 adrenergic receptor (B2AR) response. This is G protein-coupled receptor 88 (Gpr88) from Rattus norvegicus (Rat).